The primary structure comprises 341 residues: S-adenosylmethionine:tRNA ribosyltransferase-isomerase (341 aa).

The protein belongs to the QueA family. In terms of assembly, monomer.

It localises to the cytoplasm. It catalyses the reaction 7-aminomethyl-7-carbaguanosine(34) in tRNA + S-adenosyl-L-methionine = epoxyqueuosine(34) in tRNA + adenine + L-methionine + 2 H(+). It participates in tRNA modification; tRNA-queuosine biosynthesis. Transfers and isomerizes the ribose moiety from AdoMet to the 7-aminomethyl group of 7-deazaguanine (preQ1-tRNA) to give epoxyqueuosine (oQ-tRNA). The protein is S-adenosylmethionine:tRNA ribosyltransferase-isomerase of Pelotomaculum thermopropionicum (strain DSM 13744 / JCM 10971 / SI).